A 243-amino-acid polypeptide reads, in one-letter code: Ribonuclease 3 (243 aa).

Positions 15–144 (NDTISKIINY…LIGAIYIDGG (130 aa)) constitute an RNase III domain. Glu-57 is a binding site for Mg(2+). Asp-61 is a catalytic residue. Residues Asn-130 and Glu-133 each contribute to the Mg(2+) site. Glu-133 is an active-site residue. The region spanning 169–238 (DPKTSLQEWT…AELMLEKINN (70 aa)) is the DRBM domain.

The protein belongs to the ribonuclease III family. In terms of assembly, homodimer. Mg(2+) serves as cofactor.

Its subcellular location is the cytoplasm. The enzyme catalyses Endonucleolytic cleavage to 5'-phosphomonoester.. Digests double-stranded RNA. Involved in the processing of primary rRNA transcript to yield the immediate precursors to the large and small rRNAs (23S and 16S). Processes some mRNAs, and tRNAs when they are encoded in the rRNA operon. Processes pre-crRNA and tracrRNA of type II CRISPR loci if present in the organism. The chain is Ribonuclease 3 from Wolbachia sp. subsp. Brugia malayi (strain TRS).